A 506-amino-acid polypeptide reads, in one-letter code: Anaerobic nitric oxide reductase transcription regulator NorR (506 aa).

4-aspartylphosphate is present on D57. Residues 187–416 form the Sigma-54 factor interaction domain; sequence MIGLSPAMTQ…LEHAIHRAVV (230 aa). ATP is bound by residues 215–222 and 278–287; these read GETGTGKE and ADNGTLFLDE. Residues 481–500 constitute a DNA-binding region (H-T-H motif); the sequence is WAASARALETDVANLHRLAK.

The protein operates within nitrogen metabolism; nitric oxide reduction. Required for the expression of anaerobic nitric oxide (NO) reductase, acts as a transcriptional activator for at least the norVW operon. Activation also requires sigma-54. The chain is Anaerobic nitric oxide reductase transcription regulator NorR from Salmonella arizonae (strain ATCC BAA-731 / CDC346-86 / RSK2980).